Here is a 34-residue protein sequence, read N- to C-terminus: Colipase (34 aa).

2 disulfide bridges follow: C12–C23 and C18–C34.

It belongs to the colipase family. As to quaternary structure, forms a 1:1 stoichiometric complex with pancreatic lipase. Expressed by the pancreas.

It is found in the secreted. Its function is as follows. Colipase is a cofactor of pancreatic lipase. It allows the lipase to anchor itself to the lipid-water interface. Without colipase the enzyme is washed off by bile salts, which have an inhibitory effect on the lipase. This Gallus gallus (Chicken) protein is Colipase (CLPS).